We begin with the raw amino-acid sequence, 128 residues long: Sulfurtransferase TusD (128 aa).

Residue Cys-78 is the Cysteine persulfide intermediate of the active site.

This sequence belongs to the DsrE/TusD family. As to quaternary structure, heterohexamer, formed by a dimer of trimers. The hexameric TusBCD complex contains 2 copies each of TusB, TusC and TusD. The TusBCD complex interacts with TusE.

It is found in the cytoplasm. Its function is as follows. Part of a sulfur-relay system required for 2-thiolation of 5-methylaminomethyl-2-thiouridine (mnm(5)s(2)U) at tRNA wobble positions. Accepts sulfur from TusA and transfers it in turn to TusE. This Shigella boydii serotype 18 (strain CDC 3083-94 / BS512) protein is Sulfurtransferase TusD.